A 705-amino-acid polypeptide reads, in one-letter code: MSIPVILNKSNSNISTVNTIVENTIKNIFIDDNNIYVTDSNDILYLYNNYQFYPFTSKMKRIQNCFMIDSETFIVHHSSTISIFDKNYVKIDQEVDTWITNNIDRVAYDIDFGLVATLENGDIYVNFGVGNNENNYGSSDINRLCLNTICSDNNKYLRTKFHSYEDMKIISKTLIAHKENTIDIFFLYTNTVKYIRSAYIDSESFGKIIEFNSILNYFVSTDFNPYFLTETPEIYKDTNNFFFPKIPYYFSIIDNNLYCYHTKNYYDKLIPPLMSILSVSTNTTTILPHNNWLTVLVLPENSSSKIVFTSIENQVLIHNGQFYSIKNDYQHIVFDEILINYDTINSMYIDKSNVEFVIDIEQDVPVIDQLINIIPNIYRLNNKYIYYFEQIDKKGSIVSYGDGVSRFVFNSLRREIDEILATKFEYCDTGMAIKLGKMMYFCNVDGSETFENIHPYFFFTMSKESDYTYLLKKFKSASYNIYYNQWIQYKNNPQTLVELGLGLNNSNDYIRYLMTSDLNEEQINLYNNFIDGYLFFMNRTSIYDIVKNYPISYYVNKLLFEGYFELSVQFRKESDDVNDNDYDEFCALFDNIFKELSHREMSCISQNVTGSNYYVGEITVVYSFTNNKLQKQVYDGSTIIPEEEGVSAVENPIESIDTTDNYDDSDISYQISTCNTELVVNIPPNENLIRKLFDILVVEDTYLKN.

This is an uncharacterized protein from Acanthamoeba polyphaga (Amoeba).